The following is a 131-amino-acid chain: Small ribosomal subunit protein eS6 (131 aa).

Positions 76–95 (APPGFKPKRKGERRRKTVRG) are disordered. Over residues 81–93 (KPKRKGERRRKTV) the composition is skewed to basic residues.

This sequence belongs to the eukaryotic ribosomal protein eS6 family.

The sequence is that of Small ribosomal subunit protein eS6 from Methanocaldococcus jannaschii (strain ATCC 43067 / DSM 2661 / JAL-1 / JCM 10045 / NBRC 100440) (Methanococcus jannaschii).